Reading from the N-terminus, the 326-residue chain is ELMO domain-containing protein 1 (326 aa).

Residues 133 to 306 form the ELMO domain; the sequence is QHEEMLLKLW…KFRKRIIKQL (174 aa).

In terms of biological role, acts as a GTPase-activating protein (GAP) toward guanine nucleotide exchange factors like ARL2, ARL3, ARF1 and ARF6, but not for GTPases outside the Arf family. This chain is ELMO domain-containing protein 1 (Elmod1), found in Mus musculus (Mouse).